The sequence spans 142 residues: Large ribosomal subunit protein uL11 (142 aa).

This sequence belongs to the universal ribosomal protein uL11 family. As to quaternary structure, part of the ribosomal stalk of the 50S ribosomal subunit. Interacts with L10 and the large rRNA to form the base of the stalk. L10 forms an elongated spine to which L12 dimers bind in a sequential fashion forming a multimeric L10(L12)X complex. Post-translationally, one or more lysine residues are methylated.

Forms part of the ribosomal stalk which helps the ribosome interact with GTP-bound translation factors. The chain is Large ribosomal subunit protein uL11 from Hahella chejuensis (strain KCTC 2396).